The following is a 217-amino-acid chain: Putative 3-methyladenine DNA glycosylase (217 aa).

The RPE2 insert domain occupies 105 to 145; it reads SHNNVYTIDTAKIKSQITDEKTQSIIIRKNRRIMKFYIPNL.

It belongs to the DNA glycosylase MPG family.

This is Putative 3-methyladenine DNA glycosylase from Rickettsia prowazekii (strain Madrid E).